Consider the following 191-residue polypeptide: Lipopolysaccharide export system protein LptC (191 aa).

Residues 7-25 (WVIIVLSLAVLVMIGINMA) form a helical membrane-spanning segment.

It belongs to the LptC family. As to quaternary structure, component of the lipopolysaccharide transport and assembly complex. Interacts with LptA and the LptBFG transporter complex.

It is found in the cell inner membrane. Its function is as follows. Involved in the assembly of lipopolysaccharide (LPS). Required for the translocation of LPS from the inner membrane to the outer membrane. Facilitates the transfer of LPS from the inner membrane to the periplasmic protein LptA. Could be a docking site for LptA. The polypeptide is Lipopolysaccharide export system protein LptC (Escherichia coli O157:H7).